A 110-amino-acid polypeptide reads, in one-letter code: Replication initiation control protein YabA (110 aa).

Zn(2+) is bound by residues His-84, Cys-86, Cys-100, and Cys-103.

It belongs to the YabA family. As to quaternary structure, homotetramer. Interacts with both DnaA and DnaN, acting as a bridge between these two proteins. Zn(2+) serves as cofactor.

The protein resides in the cytoplasm. It is found in the nucleoid. Functionally, involved in control of chromosome replication initiation. Inhibits the cooperative binding of DnaA to the oriC region, thus negatively regulating initiation of chromosome replication. Inhibits the ability of DnaA-ATP to form a helix on DNA; does not disassemble preformed DnaA-DNA helices. Decreases the residence time of DnaA on the chromosome at its binding sites (oriC, replication forks and promoter-binding sites). Tethers DnaA to the replication machinery via the DNA polymerase beta sliding clamp subunit (dnaN). Associates with oriC and other DnaA targets on the chromosome in a DnaA-dependent manner. This chain is Replication initiation control protein YabA, found in Streptococcus mutans serotype c (strain ATCC 700610 / UA159).